The chain runs to 490 residues: ATP synthase subunit beta, chloroplastic (490 aa).

T6 is modified (phosphothreonine). S13 carries the post-translational modification Phosphoserine. Residue 172-179 (GGAGVGKT) participates in ATP binding.

This sequence belongs to the ATPase alpha/beta chains family. In terms of assembly, F-type ATPases have 2 components, CF(1) - the catalytic core - and CF(0) - the membrane proton channel. CF(1) has five subunits: alpha(3), beta(3), gamma(1), delta(1), epsilon(1). CF(0) has four main subunits: a(1), b(1), b'(1) and c(9-12).

Its subcellular location is the plastid. It is found in the chloroplast thylakoid membrane. It catalyses the reaction ATP + H2O + 4 H(+)(in) = ADP + phosphate + 5 H(+)(out). In terms of biological role, produces ATP from ADP in the presence of a proton gradient across the membrane. The catalytic sites are hosted primarily by the beta subunits. This is ATP synthase subunit beta, chloroplastic from Aethionema cordifolium (Lebanon stonecress).